Reading from the N-terminus, the 262-residue chain is Diaminopimelate epimerase (262 aa).

Substrate-binding residues include asparagine 17, glutamine 45, and asparagine 63. The active-site Proton donor is the cysteine 72. Substrate-binding positions include 73 to 74 (GN), asparagine 154, asparagine 187, and 205 to 206 (ER). Cysteine 214 acts as the Proton acceptor in catalysis. Position 215–216 (215–216 (GS)) interacts with substrate.

It belongs to the diaminopimelate epimerase family. In terms of assembly, homodimer.

It is found in the cytoplasm. It catalyses the reaction (2S,6S)-2,6-diaminopimelate = meso-2,6-diaminopimelate. It participates in amino-acid biosynthesis; L-lysine biosynthesis via DAP pathway; DL-2,6-diaminopimelate from LL-2,6-diaminopimelate: step 1/1. Catalyzes the stereoinversion of LL-2,6-diaminopimelate (L,L-DAP) to meso-diaminopimelate (meso-DAP), a precursor of L-lysine and an essential component of the bacterial peptidoglycan. The protein is Diaminopimelate epimerase of Wolbachia sp. subsp. Drosophila simulans (strain wRi).